Here is a 494-residue protein sequence, read N- to C-terminus: UPF0164 protein TP_0859/TP_0860 (494 aa).

A signal peptide spans 1–44; sequence MVRRPCVSAAPVRVGGRLVFGFARVGSRGLCLGALLLSPRIVLA.

This sequence belongs to the UPF0164 family.

This chain is UPF0164 protein TP_0859/TP_0860, found in Treponema pallidum (strain Nichols).